Consider the following 101-residue polypeptide: Small ribosomal subunit protein uS14 (101 aa).

Belongs to the universal ribosomal protein uS14 family. Part of the 30S ribosomal subunit. Contacts proteins S3 and S10.

Functionally, binds 16S rRNA, required for the assembly of 30S particles and may also be responsible for determining the conformation of the 16S rRNA at the A site. The chain is Small ribosomal subunit protein uS14 from Shewanella baltica (strain OS155 / ATCC BAA-1091).